The following is a 600-amino-acid chain: DNA repair and recombination protein mus-11 (600 aa).

The DNA-binding element occupies 148–152 (KRALR). Residues 268–319 (LNPQAQQSRPLSRSGSTGSLNTRQQPQNSHQFTARAQSRPPQQQLNSNQSRP) show a composition bias toward polar residues. Disordered stretches follow at residues 268-357 (LNPQ…AGAA) and 387-600 (APKP…QRLA). 2 stretches are compositionally biased toward low complexity: residues 325–343 (NNSS…TTPQ) and 458–470 (ARSA…RAGP). Positions 502–512 (GFSSSPSTNRG) are enriched in polar residues. Composition is skewed to low complexity over residues 540–564 (SATT…APSA) and 577–591 (ANAS…ATSG).

It belongs to the RAD52 family. In terms of assembly, part of a complex that includes mei-3/rad51 and mus-11/rad52.

Its subcellular location is the nucleus. Its function is as follows. Involved in DNA double-strand break (DSB) repair and recombination. Promotes the annealing of complementary single-stranded DNA and by stimulation of the mei-3/rad51 recombinase. The protein is DNA repair and recombination protein mus-11 (mus-11) of Neurospora crassa (strain ATCC 24698 / 74-OR23-1A / CBS 708.71 / DSM 1257 / FGSC 987).